The primary structure comprises 113 residues: Probable 4-amino-4-deoxy-L-arabinose-phosphoundecaprenol flippase subunit ArnE (113 aa).

3 helical membrane-spanning segments follow: residues 40-60, 64-84, and 92-112; these read FGWLMLAALLLGIGLLLWLLV, LPLGVAYPLLSINFVLVTLLA, and VDRHHWWGIALIVIGIYLMQG.

The protein belongs to the ArnE family. Heterodimer of ArnE and ArnF.

The protein resides in the cell inner membrane. It participates in bacterial outer membrane biogenesis; lipopolysaccharide biosynthesis. Functionally, translocates 4-amino-4-deoxy-L-arabinose-phosphoundecaprenol (alpha-L-Ara4N-phosphoundecaprenol) from the cytoplasmic to the periplasmic side of the inner membrane. This chain is Probable 4-amino-4-deoxy-L-arabinose-phosphoundecaprenol flippase subunit ArnE, found in Pectobacterium atrosepticum (strain SCRI 1043 / ATCC BAA-672) (Erwinia carotovora subsp. atroseptica).